The following is a 241-amino-acid chain: Agamous-like MADS-box protein AGL8 homolog (241 aa).

Positions 3–57 constitute an MADS-box domain; that stretch reads RGRVQLKRIENKINRQVTFSKRRSGLLKKAHEISVLCDAEVALVIFSSKGKLFEY. Residues 88-178 enclose the K-box domain; that stretch reads SENWVLEHAK…LKKIKEREKN (91 aa).

Its subcellular location is the nucleus. Its function is as follows. Probable transcription factor. This chain is Agamous-like MADS-box protein AGL8 homolog (AGL8), found in Sinapis alba (White mustard).